The chain runs to 425 residues: Histone-binding protein RBBP4 (425 aa).

Ala2 carries the N-acetylalanine modification. WD repeat units follow at residues Tyr32 to Gly125, Glu126 to Gly175, His176 to Phe223, Gly225 to Asp270, Ala271 to Glu314, Ser315 to Gly371, and Gly372 to Met404. The segment at Asp361–Glu406 is interaction with HAT1.

The protein belongs to the WD repeat RBAP46/RBAP48/MSI1 family. As to quaternary structure, binds directly to histone H4, probably via helix 1 of the histone fold, a region that is not accessible when histone H4 is in chromatin. Interacts with CHAF1A, HDAC1, HDAC2, HDAC3 and HIRA. May also interact with HAT1.

Its subcellular location is the nucleus. The protein resides in the chromosome. It localises to the telomere. In terms of biological role, core histone-binding subunit that may target chromatin assembly factors, chromatin remodeling factors and histone deacetylases to their histone substrates in a manner that is regulated by nucleosomal DNA. Component of several complexes which regulate chromatin metabolism. The chain is Histone-binding protein RBBP4 (RBBP4) from Gallus gallus (Chicken).